The sequence spans 153 residues: uncharacterized protein (153 aa).

The N-terminal stretch at 1 to 21 (MKITITSLLFFLVMIVELASA) is a signal peptide.

This is an uncharacterized protein from Saccharomyces cerevisiae (strain ATCC 204508 / S288c) (Baker's yeast).